A 157-amino-acid polypeptide reads, in one-letter code: Transcription elongation factor GreB (157 aa).

Residues 52–73 (KKLLREIDRRVRYLRKRLEDMR) adopt a coiled-coil conformation.

The protein belongs to the GreA/GreB family. GreB subfamily.

Functionally, necessary for efficient RNA polymerase transcription elongation past template-encoded arresting sites. The arresting sites in DNA have the property of trapping a certain fraction of elongating RNA polymerases that pass through, resulting in locked ternary complexes. Cleavage of the nascent transcript by cleavage factors such as GreA or GreB allows the resumption of elongation from the new 3'terminus. GreB releases sequences of up to 9 nucleotides in length. The polypeptide is Transcription elongation factor GreB (Pseudomonas syringae pv. tomato (strain ATCC BAA-871 / DC3000)).